Here is a 172-residue protein sequence, read N- to C-terminus: Adenine phosphoribosyltransferase (172 aa).

It belongs to the purine/pyrimidine phosphoribosyltransferase family. Homodimer.

The protein localises to the cytoplasm. The catalysed reaction is AMP + diphosphate = 5-phospho-alpha-D-ribose 1-diphosphate + adenine. It functions in the pathway purine metabolism; AMP biosynthesis via salvage pathway; AMP from adenine: step 1/1. Catalyzes a salvage reaction resulting in the formation of AMP, that is energically less costly than de novo synthesis. In Synechocystis sp. (strain ATCC 27184 / PCC 6803 / Kazusa), this protein is Adenine phosphoribosyltransferase.